Here is a 185-residue protein sequence, read N- to C-terminus: Calcium-binding protein CML37 (185 aa).

A compositionally biased stretch (polar residues) spans 1 to 12 (MTLAKNQKSSLS). Positions 1–45 (MTLAKNQKSSLSRLYKKVSSKRSESSRNLEDESRTSSNSSGSSSL) are disordered. Basic and acidic residues predominate over residues 21–34 (KRSESSRNLEDESR). Low complexity predominate over residues 35–44 (TSSNSSGSSS). 4 consecutive EF-hand domains span residues 45 to 80 (LNVN…LGGA), 81 to 116 (LSSR…EDGS), 119 to 154 (ERRK…LGES), and 155 to 185 (CTVD…LMMR). The Ca(2+) site is built by Asp58, Asn60, Asp62, Lys64, Glu69, Asp94, Asp96, Asp98, and Glu105. Ca(2+)-binding residues include Asp168, Asn170, Asp172, and Glu179.

In terms of assembly, binds to ABCG36. Expressed in cotyledons, stipule, young leaves and at the hypocotyl-root junction. In mature root, expressed in the stele, cortex, emerging lateral root, root tip and root cap. In mature plant, expressed at the base of cauline and floral branches, and in rosette and cauline leaves. Expressed from stage 9 to 14 of flower development in anthers. At stage 15, expressed in carpel, sepals, petals and pollen until dehiscence. Expressed in developing seeds and young siliques.

Functionally, potential calcium sensor that binds calcium in vitro. The chain is Calcium-binding protein CML37 from Arabidopsis thaliana (Mouse-ear cress).